The chain runs to 5289 residues: Mucin-2 (5289 aa).

The N-terminal stretch at 1–20 (MGLPLARLAAVCLALSLAGG) is a signal peptide. Ser21 carries the post-translational modification Phosphoserine. His34 serves as a coordination point for Cu(2+). A VWFD 1 domain is found at 35-207 (NVCSTWGNFH…KINQPDVVCE (173 aa)). 29 disulfides stabilise this stretch: Cys37/Cys169, Cys59/Cys206, Cys67/Cys166, Cys218/Cys255, Cys225/Cys250, Cys237/Cys275, Cys257/Cys263, Cys265/Cys291, Cys295/Cys329, Cys308/Cys321, Cys312/Cys351, Cys331/Cys345, Cys353/Cys375, Cys370/Cys387, Cys373/Cys382, Cys391/Cys528, Cys413/Cys563, Cys435/Cys443, Cys574/Cys619, Cys588/Cys614, Cys601/Cys639, Cys621/Cys627, Cys629/Cys654, Cys661/Cys698, Cys674/Cys688, Cys678/Cys718, Cys700/Cys712, Cys720/Cys742, and Cys740/Cys749. Asp49 contacts Ca(2+). Cu(+) contacts are provided by Met146 and Met154. A Cu(2+)-binding site is contributed by Glu156. Asn163 carries an N-linked (GlcNAc...) asparagine glycan. Ca(2+) is bound by residues Asp171, Asn173, Leu175, and Glu180. Residue His277 participates in Cu(2+) binding. Residues 295–351 (CPGNLVYLESGSPCMDTCSHLEVSSLCEEHRMDGCFCPEGTVYDDIGDSGCVPVSQC) enclose the TIL domain. His324 is a binding site for Cu(2+). Met326 is a binding site for Cu(+). The 176-residue stretch at 389–564 (GTCALEGGSH…NTWKAQSSCH (176 aa)) folds into the VWFD 2 domain. Asp403 lines the Ca(2+) pocket. Asn423 carries N-linked (GlcNAc...) asparagine glycosylation. Residues Asn530, Asn532, Leu534, Asp537, and Asp538 each coordinate Ca(2+). Asn670 is a glycosylation site (N-linked (GlcNAc...) asparagine). N-linked (GlcNAc...) asparagine glycosylation is present at Asn770. Disulfide bonds link Cys784–Cys820, Cys802–Cys814, Cys822–Cys844, Cys839–Cys856, Cys842–Cys851, Cys860–Cys992, Cys882–Cys1027, Cys891–Cys989, Cys909–Cys916, Cys1037–Cys1080, Cys1051–Cys1075, Cys1062–Cys1102, Cys1082–Cys1090, Cys1092–Cys1117, Cys1108–Cys1137, Cys1121–Cys1163, Cys1145–Cys1187, Cys1167–Cys1181, Cys1189–Cys1213, Cys1208–Cys1238, and Cys1211–Cys1221. Positions 858–1028 (GTCSIYGSGH…NSWKEAPTCP (171 aa)) constitute a VWFD 3 domain. Asp872 is a binding site for Ca(2+). N-linked (GlcNAc...) asparagine glycosylation occurs at Asn894. Ca(2+)-binding residues include Asn994, Asp996, Arg998, Asn1001, and Asp1002. Asn1139 and Asn1154 each carry an N-linked (GlcNAc...) asparagine glycan. N-linked (GlcNAc...) asparagine glycans are attached at residues Asn1215, Asn1230, and Asn1246. Residues Thr1266, Thr1267, Thr1269, Thr1270, Thr1272, Thr1275, Thr1276, Thr1281, Thr1282, and Thr1287 are each glycosylated (O-linked (GalNAc) threonine). 2 O-linked (GalNAc) serine glycosylation sites follow: Ser1291 and Ser1292. The O-linked (GalNAc) threonine glycan is linked to Thr1293. Ser1296 is a glycosylation site (O-linked (GalNAc) serine). Thr1297 carries an O-linked (GalNAc) threonine glycan. Ca(2+) is bound by residues Asn1310, Asp1312, His1313, Ser1316, Asp1319, Gly1321, Asp1322, Glu1324, Asp1381, and Tyr1382. Pro residues-rich tracts occupy residues 1399 to 1411 (PSPP…PPPT), 1419 to 1510 (TTTP…PITP), 1520 to 1549 (TTTP…PITP), 1559 to 1628 (TTTP…PITP), and 1638 to 1679 (TTTP…PPTT). A disordered region spans residues 1399–1773 (PSPPTTTPSP…SITPPTFSPF (375 aa)). 6 consecutive repeat copies span residues 1401 to 1416 (PPTT…TTTL), 1417 to 1432 (PPTT…TTTP), 1433 to 1448 (PPTT…TTTP), 1449 to 1464 (PPTT…TTTP), 1465 to 1471 (PPTTTPS), and 1472 to 1478 (PPTTTPS). The interval 1401-1747 (PPTTTPSPPP…SPPTTTMTTL (347 aa)) is approximate repeats. The 7A repeat unit spans residues 1479 to 1494 (PPTTTPSPPTTTTTTP). A 7B repeat occupies 1495-1517 (PPTTTPSPPTTTPITPPASTTTL). The stretch at 1518–1533 (PPTTTPSPPTTTTTTP) is one 8A repeat. Residues 1534–1556 (PPTTTPSPPTTTPITPPTSTTTL) form an 8B repeat. Residues 1557–1572 (PPTTTPSPPPTTTTTP) form a 9A repeat. The 9B repeat unit spans residues 1573-1596 (PPTTTPSPPTTTTPSPPTITTTTP). Residues 1597 to 1612 (PPTTTPSPPTTTTTTP) form a 10A repeat. The 10B repeat unit spans residues 1613–1635 (PPTTTPSPPTTTPITPPTSTTTL). One copy of the 11A repeat lies at 1636–1651 (PPTTTPSPPPTTTTTP). One copy of the 11B repeat lies at 1652–1675 (PPTTTPSPPTTTTPSPPITTTTTP). Tandem repeats lie at residues 1676-1683 (PPTTTPSS), 1684-1699 (PITT…MTTP), 1700-1715 (SPTT…TTTP), 1716-1731 (SSTT…MTTP), and 1732-1747 (SPTT…MTTL). Low complexity-rich tracts occupy residues 1680–1720 (TPSS…STTT) and 1741–1759 (TTTM…LTTT). Positions 1760 to 1770 (PLPPSITPPTF) are enriched in pro residues. N-linked (GlcNAc...) asparagine glycosylation is found at Asn1787 and Asn1820. Low complexity-rich tracts occupy residues 1885 to 2158 (MTTT…TMVT), 2165 to 4238 (GTQT…QTPT), 4269 to 4315 (TTVT…STAP), and 4329 to 4430 (STPQ…PSII). Disordered stretches follow at residues 1885–4238 (MTTT…QTPT) and 4269–4430 (TTVT…PSII). Residues Asn4449, Asn4461, Asn4472, and Asn4483 are each glycosylated (N-linked (GlcNAc...) asparagine). The disordered stretch occupies residues 4492-4524 (PTPTPSKSTPTPSKPSSTPSKPTPGTKPPECPD). Positions 4496 to 4511 (PSKSTPTPSKPSSTPS) are enriched in low complexity. The span at 4512-4522 (KPTPGTKPPEC) shows a compositional bias: pro residues. N-linked (GlcNAc...) asparagine glycosylation is found at Asn4532, Asn4548, and Asn4612. Residues 4589–4772 (CYCTGWGDPH…VNDPSKPHCP (184 aa)) form the VWFD 4 domain. Intrachain disulfides connect Cys4591-Cys4732, Cys4613-Cys4771, and Cys4637-Cys4645. N-linked (GlcNAc...) asparagine glycans are attached at residues Asn4726 and Asn4737. Positions 4770–4795 (HCPHSSSTTKRPAVTVPGGGKTTPHK) are disordered. 9 N-linked (GlcNAc...) asparagine glycosylation sites follow: Asn4862, Asn4897, Asn4991, Asn4998, Asn5065, Asn5080, Asn5129, Asn5148, and Asn5179. A VWFC 1 domain is found at 4927–4996 (CVGPDNVPRE…DTCCNITVCK (70 aa)). Residues 5034 to 5101 (GVCVHGNAEY…APGECCKKCE (68 aa)) enclose the VWFC 2 domain. Disulfide bonds link Cys5185–Cys5232, Cys5199–Cys5246, Cys5208–Cys5262, and Cys5212–Cys5264. The 86-residue stretch at 5185 to 5270 (CSTVPVTTEV…SCQCQDTVCG (86 aa)) folds into the CTCK domain.

As to quaternary structure, homomultimer; disulfide-linked. The N- and C-terminus mediate their assembly into higher order structures to form filaments. The CTCK domains of two polypeptides associate in the endoplasmic reticulum to generate intermolecularly disulfide-bonded dimers. These dimers progress to the Golgi apparatus, which is a more acidic environment than the endoplasmic reticulum. Under acidic conditions, the N-termini form non-covalent intermolecular interactions that juxtapose assemblies of the third VWD domain (VWD3) from different CTCK-linked dimers. The VWD3 assemblies then become disulfide bonded to one another to produce long, disulfide-linked polymers that remain highly compact until secretion. Interacts with FCGBP. Interacts with AGR2; disulfide-linked. In terms of assembly, (Microbial infection) Interacts in vitro with L.monocytogenes internalin proteins InlB, InlC and InlJ; for InlC binding is slightly better at pH 5.5, (the pH of the intestine) than at pH 7.4. In terms of processing, O-glycosylated. O-glycosylation is required for mucin assembly. Goblet cells synthesize two forms of mucin that differ in branched chain O-glycosylation and the site of production in the colon. May undergo proteolytic cleavage in the outer mucus layer of the colon, contributing to the expanded volume and loose nature of this layer which allows for bacterial colonization in contrast to the inner mucus layer which is dense and devoid of bacteria. Post-translationally, at low pH of 6 and under, undergoes autocatalytic cleavage in vitro in the N-terminal region of the fourth VWD domain. It is likely that this also occurs in vivo and is triggered by the low pH of the late secretory pathway. In terms of tissue distribution, colon, small intestine, colonic tumors, bronchus, cervix and gall bladder.

Its subcellular location is the secreted. In terms of biological role, coats the epithelia of the intestines and other mucus membrane-containing organs to provide a protective, lubricating barrier against particles and infectious agents at mucosal surfaces. Major constituent of the colon mucus, which is mainly formed by large polymeric networks of MUC2 secreted by goblet cells that cover the exposed surfaces of intestine. MUC2 networks form hydrogels that guard the underlying epithelium from pathogens and other hazardous matter entering from the outside world, while permitting nutrient absorption and gas exchange. Acts as a divalent copper chaperone that protects intestinal cells from copper toxicity and facilitates nutritional copper unptake into cells. Binds both Cu(2+) and its reduced form, Cu(1+), at two juxtaposed binding sites: Cu(2+), once reduced to Cu(1+) by vitamin C (ascorbate) or other dietary antioxidants, transits to the other binding site. MUC2-bound Cu(1+) is protected from oxidation in aerobic environments, and can be released for nutritional delivery to cells. Mucin gels store antimicrobial molecules that participate in innate immunity. Mucin glycoproteins also house and feed the microbiome, lubricate tissue surfaces, and may facilitate the removal of contaminants and waste products from the body. Goblet cells synthesize two forms of MUC2 mucin that differ in branched chain O-glycosylation and the site of production in the colon: a (1) 'thick' mucus that wraps the microbiota to form fecal pellets is produced in the proximal, ascending colon. 'Thick' mucus transits along the descending colon and is lubricated by a (2) 'thin' MUC2 mucus produced in the distal colon which adheres to the 'thick' mucus. The protein is Mucin-2 of Homo sapiens (Human).